The following is a 127-amino-acid chain: Large ribosomal subunit protein bL17 (127 aa).

It belongs to the bacterial ribosomal protein bL17 family. In terms of assembly, part of the 50S ribosomal subunit. Contacts protein L32.

The protein is Large ribosomal subunit protein bL17 of Aeromonas hydrophila subsp. hydrophila (strain ATCC 7966 / DSM 30187 / BCRC 13018 / CCUG 14551 / JCM 1027 / KCTC 2358 / NCIMB 9240 / NCTC 8049).